The sequence spans 369 residues: Peptide chain release factor 1 (369 aa).

At Gln234 the chain carries N5-methylglutamine.

This sequence belongs to the prokaryotic/mitochondrial release factor family. Post-translationally, methylated by PrmC. Methylation increases the termination efficiency of RF1.

Its subcellular location is the cytoplasm. Peptide chain release factor 1 directs the termination of translation in response to the peptide chain termination codons UAG and UAA. The sequence is that of Peptide chain release factor 1 from Kocuria rhizophila (strain ATCC 9341 / DSM 348 / NBRC 103217 / DC2201).